The primary structure comprises 75 residues: MRLVVCLVFLASFALVCQGQGYKGPYTRPILRPYVRPVVSYNACTLSCRGITTTQARSCCTRLGRCCHVAKGYSG.

A signal peptide spans 1 to 19 (MRLVVCLVFLASFALVCQG). The residue at position 20 (Q20) is a Pyrrolidone carboxylic acid. 3 disulfide bridges follow: C44/C59, C48/C66, and C60/C67. S74 is modified (serine amide).

It belongs to the penaeidin family.

Its subcellular location is the cytoplasmic granule. Functionally, antibacterial and antifungal activity. Presents chitin-binding activity. In Penaeus setiferus (Atlantic white shrimp), this protein is Penaeidin-3k.